Here is a 411-residue protein sequence, read N- to C-terminus: Argininosuccinate lyase (411 aa).

The protein belongs to the lyase 1 family. Argininosuccinate lyase subfamily.

The protein localises to the cytoplasm. The catalysed reaction is 2-(N(omega)-L-arginino)succinate = fumarate + L-arginine. It participates in amino-acid biosynthesis; L-arginine biosynthesis; L-arginine from L-ornithine and carbamoyl phosphate: step 3/3. The sequence is that of Argininosuccinate lyase from Legionella pneumophila subsp. pneumophila (strain Philadelphia 1 / ATCC 33152 / DSM 7513).